A 50-amino-acid chain; its full sequence is Large ribosomal subunit protein bL33 (50 aa).

This sequence belongs to the bacterial ribosomal protein bL33 family.

The polypeptide is Large ribosomal subunit protein bL33 (Citrifermentans bemidjiense (strain ATCC BAA-1014 / DSM 16622 / JCM 12645 / Bem) (Geobacter bemidjiensis)).